The following is a 125-amino-acid chain: uncharacterized protein (125 aa).

It localises to the plastid. This is an uncharacterized protein from Euglena longa (Euglenophycean alga).